Reading from the N-terminus, the 495-residue chain is Bifunctional protein GlmU (495 aa).

Residues methionine 1 to arginine 241 are pyrophosphorylase. UDP-N-acetyl-alpha-D-glucosamine is bound by residues leucine 12 to glycine 15, lysine 26, glutamine 83, glycine 88 to threonine 89, serine 112 to aspartate 114, glycine 151, glutamate 166, asparagine 181, and asparagine 239. Mg(2+) is bound at residue aspartate 114. Asparagine 239 serves as a coordination point for Mg(2+). A linker region spans residues valine 242–alanine 262. The interval glycine 263–proline 495 is N-acetyltransferase. Arginine 344 and lysine 362 together coordinate UDP-N-acetyl-alpha-D-glucosamine. The Proton acceptor role is filled by histidine 374. 2 residues coordinate UDP-N-acetyl-alpha-D-glucosamine: tyrosine 377 and asparagine 388. Acetyl-CoA contacts are provided by residues alanine 391, asparagine 397–tyrosine 398, serine 416, and alanine 434. The interval isoleucine 457–proline 495 is disordered. Residues glutamine 483 to proline 495 are compositionally biased toward low complexity.

This sequence in the N-terminal section; belongs to the N-acetylglucosamine-1-phosphate uridyltransferase family. In the C-terminal section; belongs to the transferase hexapeptide repeat family. Homotrimer. Mg(2+) serves as cofactor.

Its subcellular location is the cytoplasm. It catalyses the reaction alpha-D-glucosamine 1-phosphate + acetyl-CoA = N-acetyl-alpha-D-glucosamine 1-phosphate + CoA + H(+). The catalysed reaction is N-acetyl-alpha-D-glucosamine 1-phosphate + UTP + H(+) = UDP-N-acetyl-alpha-D-glucosamine + diphosphate. It functions in the pathway nucleotide-sugar biosynthesis; UDP-N-acetyl-alpha-D-glucosamine biosynthesis; N-acetyl-alpha-D-glucosamine 1-phosphate from alpha-D-glucosamine 6-phosphate (route II): step 2/2. The protein operates within nucleotide-sugar biosynthesis; UDP-N-acetyl-alpha-D-glucosamine biosynthesis; UDP-N-acetyl-alpha-D-glucosamine from N-acetyl-alpha-D-glucosamine 1-phosphate: step 1/1. Its pathway is bacterial outer membrane biogenesis; LPS lipid A biosynthesis. Its function is as follows. Catalyzes the last two sequential reactions in the de novo biosynthetic pathway for UDP-N-acetylglucosamine (UDP-GlcNAc). The C-terminal domain catalyzes the transfer of acetyl group from acetyl coenzyme A to glucosamine-1-phosphate (GlcN-1-P) to produce N-acetylglucosamine-1-phosphate (GlcNAc-1-P), which is converted into UDP-GlcNAc by the transfer of uridine 5-monophosphate (from uridine 5-triphosphate), a reaction catalyzed by the N-terminal domain. This is Bifunctional protein GlmU from Mycobacterium tuberculosis (strain ATCC 25177 / H37Ra).